The following is a 1807-amino-acid chain: Vitellogenin-A2 (1807 aa).

The N-terminal stretch at 1–15 (MKGIVLALLLALAGS) is a signal peptide. The Vitellogenin domain occupies 24–664 (FSESKISVYN…SANTMFPVFI (641 aa)). Positions 953 to 974 (TSAEGASMMEDSSEMGPKKYSA) are disordered. The N-linked (GlcNAc...) asparagine glycan is linked to Asn-1094. Residues 1095-1320 (ETALYRSKQK…SSESSSSSSE (226 aa)) are disordered. The span at 1101 to 1111 (SKQKKKNKIHN) shows a compositional bias: basic residues. Over residues 1112–1123 (RRLDAEVVEARK) the composition is skewed to basic and acidic residues. Positions 1126-1163 (SSLSSSSSSSSSSSSSSSSSSSSSSSSSPSSSSSSSYS) are enriched in low complexity. Over residues 1187–1198 (QNKKRNLQENRK) the composition is skewed to basic and acidic residues. A compositionally biased stretch (low complexity) spans 1205-1232 (SSSSSSSSSSSSSSSSSSSSSSSSSSSS). Positions 1233-1247 (EENRPHKNRQHDNKQ) are enriched in basic and acidic residues. Low complexity-rich tracts occupy residues 1263-1276 (SESSSSSSSSSSSE) and 1309-1320 (SSSSESSSSSSE). The VWFD domain maps to 1536–1714 (GECKVAQDQI…SWILPAESCS (179 aa)). 2 disulfide bridges follow: Cys-1538–Cys-1677 and Cys-1561–Cys-1713.

As to expression, produced by the liver, secreted into the blood and then sequestered by receptor mediated endocytosis into growing oocytes, where it is generally cleaved, giving rise to the respective yolk components.

Precursor of the major egg-yolk proteins that are sources of nutrients during early development of oviparous organisms. The polypeptide is Vitellogenin-A2 (Xenopus laevis (African clawed frog)).